Consider the following 430-residue polypeptide: KICSTOR complex protein kaptin (430 aa).

A disordered region spans residues 410-430 (RKHQQGLGDRVGPRPVEHPAS). A compositionally biased stretch (basic and acidic residues) spans 420-430 (VGPRPVEHPAS).

Part of the KICSTOR complex composed of KPTN, ITFG2, KICS2 and SZT2. SZT2 probably serves as a link between the other three proteins in the KICSTOR complex and mediates the direct interaction with the GATOR1 complex. May associate with F-actin filaments.

It localises to the lysosome membrane. The protein resides in the cell projection. It is found in the lamellipodium. Its subcellular location is the stereocilium. In terms of biological role, as part of the KICSTOR complex functions in the amino acid-sensing branch of the TORC1 signaling pathway. Recruits, in an amino acid-independent manner, the GATOR1 complex to the lysosomal membranes and allows its interaction with GATOR2 and the RAG GTPases. Functions upstream of the RAG GTPases and is required to negatively regulate mTORC1 signaling in absence of amino acids. In absence of the KICSTOR complex mTORC1 is constitutively localized to the lysosome and activated. The KICSTOR complex is also probably involved in the regulation of mTORC1 by glucose. The sequence is that of KICSTOR complex protein kaptin from Mus musculus (Mouse).